A 159-amino-acid chain; its full sequence is Large ribosomal subunit protein uL23m (159 aa).

The protein belongs to the universal ribosomal protein uL23 family. Component of the mitochondrial ribosome large subunit (39S) which comprises a 16S rRNA and about 50 distinct proteins.

It localises to the mitochondrion. This Caenorhabditis briggsae protein is Large ribosomal subunit protein uL23m (mrpl-23).